We begin with the raw amino-acid sequence, 261 residues long: Glutamate racemase (261 aa).

Substrate is bound by residues 9–10 (DS) and 41–42 (YG). The active-site Proton donor/acceptor is cysteine 73. 74–75 (NT) is a substrate binding site. Catalysis depends on cysteine 179, which acts as the Proton donor/acceptor. 180 to 181 (TH) contacts substrate.

Belongs to the aspartate/glutamate racemases family.

The enzyme catalyses L-glutamate = D-glutamate. Its pathway is cell wall biogenesis; peptidoglycan biosynthesis. Its function is as follows. Provides the (R)-glutamate required for cell wall biosynthesis. The protein is Glutamate racemase of Aliivibrio fischeri (strain MJ11) (Vibrio fischeri).